A 515-amino-acid chain; its full sequence is Maturase K (515 aa).

This sequence belongs to the intron maturase 2 family. MatK subfamily.

The protein resides in the plastid. It localises to the chloroplast. Functionally, usually encoded in the trnK tRNA gene intron. Probably assists in splicing its own and other chloroplast group II introns. The sequence is that of Maturase K from Picea sitchensis (Sitka spruce).